The primary structure comprises 124 residues: Large ribosomal subunit protein bL12 (124 aa).

It belongs to the bacterial ribosomal protein bL12 family. As to quaternary structure, homodimer. Part of the ribosomal stalk of the 50S ribosomal subunit. Forms a multimeric L10(L12)X complex, where L10 forms an elongated spine to which 2 to 4 L12 dimers bind in a sequential fashion. Binds GTP-bound translation factors.

Its function is as follows. Forms part of the ribosomal stalk which helps the ribosome interact with GTP-bound translation factors. Is thus essential for accurate translation. The protein is Large ribosomal subunit protein bL12 of Brucella abortus (strain S19).